Consider the following 141-residue polypeptide: Hemoglobin subunit alpha (141 aa).

The Globin domain maps to 1–141 (VLSAADKSNV…VSTVLTSKYR (141 aa)). Serine 3 carries the phosphoserine modification. Residues lysine 7 and lysine 11 each carry the N6-succinyllysine modification. Lysine 16 carries the N6-acetyllysine; alternate modification. The residue at position 16 (lysine 16) is an N6-succinyllysine; alternate. Residue tyrosine 24 is modified to Phosphotyrosine. At serine 35 the chain carries Phosphoserine. Position 40 is an N6-succinyllysine (lysine 40). At serine 49 the chain carries Phosphoserine. Histidine 58 serves as a coordination point for O2. Histidine 87 lines the heme b pocket. Serine 102 bears the Phosphoserine mark. The residue at position 108 (threonine 108) is a Phosphothreonine. Serine 124 carries the phosphoserine modification. Phosphothreonine occurs at positions 134 and 137. Serine 138 carries the post-translational modification Phosphoserine.

The protein belongs to the globin family. Heterotetramer of two alpha chains and two beta chains. As to expression, red blood cells.

Involved in oxygen transport from the lung to the various peripheral tissues. Functionally, hemopressin acts as an antagonist peptide of the cannabinoid receptor CNR1. Hemopressin-binding efficiently blocks cannabinoid receptor CNR1 and subsequent signaling. This Felis catus (Cat) protein is Hemoglobin subunit alpha (HBA).